Here is a 178-residue protein sequence, read N- to C-terminus: Large ribosomal subunit protein uL6 (178 aa).

It belongs to the universal ribosomal protein uL6 family. Part of the 50S ribosomal subunit.

This protein binds to the 23S rRNA, and is important in its secondary structure. It is located near the subunit interface in the base of the L7/L12 stalk, and near the tRNA binding site of the peptidyltransferase center. This is Large ribosomal subunit protein uL6 from Desulfatibacillum aliphaticivorans.